The sequence spans 592 residues: Serine/threonine-protein kinase ksg1 (592 aa).

A compositionally biased stretch (polar residues) spans 1 to 10 (MRNTHNPNET). The segment at 1 to 92 (MRNTHNPNET…NPSSGASTPN (92 aa)) is disordered. Over residues 11-22 (EASEDAENDTQS) the composition is skewed to acidic residues. Residues 27–37 (SFDHGSSEKLN) show a composition bias toward basic and acidic residues. The span at 42-68 (PKTQNSAIPQSNALNTTPNESTSQIDS) shows a compositional bias: polar residues. Residues Ser-64 and Ser-69 each carry the phosphoserine modification. The segment covering 80–92 (STPNPSSGASTPN) has biased composition (polar residues). The Protein kinase domain occupies 99–366 (FKFGEILGEG…VDEIHQHPFF (268 aa)). ATP contacts are provided by residues 109–111 (SYS) and Lys-128. Residues 130 to 175 (LDKRHIIKEKKEKYVNIEKEALCILSKHPGFIKLFYTFQDAHNLYF) form a PIF-pocket region. ATP is bound by residues 178-180 (SLA) and Glu-184. The active-site Proton acceptor is Asp-223. ATP-binding residues include Glu-227 and Asp-241. The region spanning 461 to 572 (ISKIGTLNVY…ELLDKASSIS (112 aa)) is the PH domain.

It belongs to the protein kinase superfamily. AGC Ser/Thr protein kinase family. PDPK1 subfamily.

It localises to the cytoplasm. The enzyme catalyses L-seryl-[protein] + ATP = O-phospho-L-seryl-[protein] + ADP + H(+). It catalyses the reaction L-threonyl-[protein] + ATP = O-phospho-L-threonyl-[protein] + ADP + H(+). In terms of biological role, involved in the control of sexual development and cell growth under stressed conditions. Phosphorylates AGC kinase gad8 at 'Thr-387', activating gad8 kinase activity and promoting sexual development. Phosphorylates AGC kinase psk1 at 'Ser-248', activating psk1 kinase activity and promoting phosphorylation of ribosomal protein S6. In Schizosaccharomyces pombe (strain 972 / ATCC 24843) (Fission yeast), this protein is Serine/threonine-protein kinase ksg1.